Consider the following 323-residue polypeptide: CYFIP-related Rac1 interactor A (323 aa).

Belongs to the CYRI family.

It is found in the membrane. May negatively regulate RAC1 signaling and RAC1-driven cytoskeletal remodeling. May regulate chemotaxis, cell migration and epithelial polarization by controlling the polarity, plasticity, duration and extent of protrusions. The chain is CYFIP-related Rac1 interactor A (CYRIA) from Gallus gallus (Chicken).